We begin with the raw amino-acid sequence, 217 residues long: Probable cytidylate kinase (217 aa).

9-17 is a binding site for ATP; the sequence is GPAGSGKST.

This sequence belongs to the cytidylate kinase family. Type 1 subfamily.

The enzyme catalyses CMP + ATP = CDP + ADP. It catalyses the reaction dCMP + ATP = dCDP + ADP. The polypeptide is Probable cytidylate kinase (Vairimorpha ceranae (strain BRL01) (Microsporidian parasite)).